The primary structure comprises 369 residues: DNA replication and repair protein RecF (369 aa).

30 to 37 contributes to the ATP binding site; the sequence is GINAQGKT.

The protein belongs to the RecF family.

The protein resides in the cytoplasm. In terms of biological role, the RecF protein is involved in DNA metabolism; it is required for DNA replication and normal SOS inducibility. RecF binds preferentially to single-stranded, linear DNA. It also seems to bind ATP. The chain is DNA replication and repair protein RecF from Macrococcus caseolyticus (strain JCSC5402) (Macrococcoides caseolyticum).